Here is a 228-residue protein sequence, read N- to C-terminus: Adapter protein MecA (228 aa).

Residues glycine 79–glutamine 98 are disordered. Positions serine 85–threonine 95 are enriched in acidic residues.

The protein belongs to the MecA family. In terms of assembly, homodimer.

In terms of biological role, enables the recognition and targeting of unfolded and aggregated proteins to the ClpC protease or to other proteins involved in proteolysis. The chain is Adapter protein MecA from Lacticaseibacillus casei (strain BL23) (Lactobacillus casei).